We begin with the raw amino-acid sequence, 229 residues long: 2-phytyl-1,4-naphtoquinone methyltransferase (229 aa).

This sequence belongs to the class I-like SAM-binding methyltransferase superfamily. MenG/UbiE family.

It catalyses the reaction demethylphylloquinol + S-adenosyl-L-methionine = phylloquinol + S-adenosyl-L-homocysteine + H(+). The protein operates within cofactor biosynthesis; phylloquinone biosynthesis. Methyltransferase required for the conversion of 2-phytyl-1,4-beta-naphthoquinol to phylloquinol. The polypeptide is 2-phytyl-1,4-naphtoquinone methyltransferase (Nostoc sp. (strain PCC 7120 / SAG 25.82 / UTEX 2576)).